Reading from the N-terminus, the 4981-residue chain is MNLAANRAPGRRRLPLPSPSLCQLLRVWGLLSLLPGSARVQAAEQRQVFQVMEEQPPGTLVGTIPTRPGFTYRLSESHALFAINSSTGALYTTATIDRESLPSDVVNLVVLSSSPTYPTEVRVLVRDLNDNAPVFPDPSIVVTFKEDSGSGRQVILDTATDSDIGSNGVDHHSYRIVSGNEAGRFRLDITLNPSGEGAFLHLVSKGGLDREVTPQYQLLVEVEDKGEPKRRGYLQVNVTVQDINDNPPVFGSSHYQAGVPEDAVVGSSVLQVAAADADEGTNADIRYRLQDEGTPFQMDPETGLITVREPLDFEARRQYSLTVQATDRGVPSLTGRAEAFIQLLDVNDNDPVVKFRYFPATSRYASVDENAQVGTVVALLTVTDADSPAANGNISVQILGGNEQRHFEVQRSKVPNLSLIKVASALDRERIPSYNLTVSVSDNSGAPPTAEVQARSSVASLVIFVNDINDHPPVFEQQVYRVNLSEEVPPGSYVSGVSATDGDSGLNANLRYSIVSGNGLGWFHISEHSGLVTTSAAGGLDRELASQIVLNISARDQGVHPKVSYAQLVVTVLDVNDEKPVFSQPEGYEVSVVENAPTGTELLVLGATDRDLGDNGTVRFSLQEAENDQRLFRLDPVSGRLSTASSLDREEQAFYCLSILATDLGSPPQSSTAQVNVSLLDINDNSPVFYPVQYFAHIQENEPGGSYVTTVSATDPDMGPNGTVKYSISAGDRSRFQIHAKSGVISTKMALDREEKTAYQLQVVATDGGNLQSPNQAIVTVTVLDTQDNPPVFSQAAYSFVVFENVALGYHVGSVSATTMDLNANISYLITTGDQRGMFAMNPVTGQLTTASVIDREEQSFYQLKIVASGGAVTGDTVVNITVKDLNDNAPHFLQAVESINAVENWQAGHSIFQAKAVDPDEGVNGRVLYSLKQNPKNLFTINEQNGNISLLGALDVHAGSYQVEIVASDMGVPQLSSSILLTVYVHDVNDNPPVFDQISYEVTLSESEPVNSRFFKVQASDKDSGANGEIAYTITDGNNGDAFGIFPDGQLYIKSELDRELQDRYVLLVVASDRAVEPLSATVNVTVLLEDVNDNRPLFNSTNYTFYFEEEQRAGSFVGKVSAVDKDFGPNGEVRYAFEVTQPNFELHAVTGEITSTHKFDRESLMRRRGTAVFSFTVTAMDRGLPQPLKDQATVHVYMKDINDNAPKFLKDFYQATVSETATNLTQVLRVSASDVDEGSNGLIHYSILKGNEERQFAIDSFSGQVTLVGKLDYEATSAYSLLIQAVDSGAIPLNSTCTLSIDILDENDNTPSFPKSTLFVDVLENMRIGELVSSVTATDSDSGVNADLHYTITGSNNHGTFSISPNTGSIFLAKKLDFETQSLYKLNITAKDQGRPPRSSTMSVVIQVRDFNDNPPSFPPGDIFKSIVENIPLGTSVISVTAHDPDADINGQLSYAIIQQMPRGNHFSIDEVKGTIYTSAEIDREFANLFELTVKANDQAVPIETRRYALKNVTILVTDLNDNVPMFISQNALAADPSAMIGSVLTTIMAADPDEGANGEVEYEILNGDTDTFTVDRYSGDLRVASALVPSQLIYNLIVSATDLGPERRKSTTELTVILQGLDGPVFTQTKYITILKEGEPIGTNVISIEAASPRGSEAPVEYYIVSVRCEEKTVGRLFTIGRQTGVIQTAAILDREQGACLYLVDVYAIEKSSAFPRTQRAEVEITLQDINDNPPVFPTDTLDLTVEENIGDGSKIMQLTAMDADEGANALVTYALISGADDSFRIDPESGDLIATKRLDREHRSKYSLLVRADDGLQSSDMRINITISDVNDHTPRFSRPVYSFDIPEDTTPGSLVAAILATDDDSGVNGEISYVVEEDDGDGVFFLNLVTGVFNLTRALDYETQQYYILTVRAEDGGGQSTTIRAYFNILDVNDNPPVFSMSSYSTSLMENLPLGSTVLVFNVTDADDGVNSQLSYSIASGDSLGQFAVDKHGVLKTLKALDRESQSFYNLVIQVHDLPQPPTSRFTSTAQVSIILLDVNDNPPMFLSPKLTYIPENTPIDTVVFKAQATDPDSGPNSYIEYTLLNPSGNKFSIGTIDGEVHLTGELDREEVSNYSLTVVATDKGQPPLSSSTEVVVMVLDINDNNPVFAQAMYRVQIKENILTGTDIIQVSAADNDEGTNGQVRYGIVGGNTHQEFRIDSVTGAITVAKSLDRETTPAYTLTVQATDRGSSPRTDSCTVAITLLDMNDFVPVFELSPYSVNVPENLGTLPRAILQVVARDDDQGPNSQLSYVLLGGNEDNAFVLTASGELRVTQSLDREARDHFVLVVTAADAGSPALTGTGTINIIVDDINDNVPTFANNMYLTSIAEDARTGTDVLLVNASDADAAANAVISYSIIGGNSQFTINPSTGQIITSALLDRETKDNYTLVVVASDAGSPESLSSSTSVLVTITDVNDNPPRFQHHPYVTHIPSPTPPGSFVFAVTVTDADIGSNSELHYSLSGRNSEKFHIDPLRGAIMAAGPLSGASEVTFSVHVKDGGSFPKTDSTTVTVRFANKADFPKVRAKEQTFMFPENQPVGTLVTTITGSSLRGETLSYYIASGNLGDTFQIDPLTGQVSISQPLDFEKIQKYVVWIEARDGGFPPFSSYEKLDITVLDINDNAPTFEEDPFVSEILENLSPRKILTVSATDKDSGPNGQLDYEIVNGNQESSFTINHATGEIRSIRPLDREKISHYELTVKSSDKGSPSQSTSVKVIISILDENDNAPRFSQIFSAYVSENSPLGYTVTRVTTSDEDIGINAISRYSIVDTSLPFTINPNTGDIVISRPLNREDTDRYRIRVSAHDSGWTVSTDVTIFVTDINDNTPRFSRPSYYLDCPELPELGSRVTQVSATDPDEGSNGQVFYFIKSQSEYFRINATTGEIFNKQVLKYQNVSGFSNVNINRHSFIVTASDRGNPSLLSETTVTINTVDSNDNPPQFLQNKYFTPVTKNVKVGTKLIKVTAVDDKDFGLNSEVEYFVSDGNHLGKFKLDNDTGWISIASSLVSDLNQNFLIRVTAKDKGNPPLSSQAVVHITVTEENYHTPEFSQNHISATIPESHSIGSVVRTVSARDRDTAMNGLISYNIISGNEEGIFAINSSTGVVTLAKALDYEMSSKHEMTISATDGGWVARTGYCSLTVSVIDVNDNSPVFVPDEFFPTVMENAPSGTTVIHLNATDADSGANAVIAYTVQSSDSDLFVIDPNMGVITTQGFLDFETKQSYHLTVKAFNVPDEEKCSFATVDIQLKGTNEYVPRFVSKLYYFEVSEAASRGTAVGEVFASDRDMGADGEVHYLIFGNSRKKGFQINKMTGQIYVSGLLDREKEERVSLKVLAKNFGNIRGADIDEVTVNITVLDANDPPVFSLSTYRVQISEGVPIGTHVTFVSAFDSDSIPSWSRFSYFIGSGNENGAFSINPQTGQITVTSGLDRESLPVYNLTVLAVDSGTPSATGSASLVVTLEDINDNGPVLTVSEGEVLENKRPGTLVMTLQSTDPDLPPNQGPFNYYLLSTGPATNYFSLSTAGVLSTTREIDREQIADFYLSVVTRDSGAPQMSSTGTVHITVLDQNDNPSQSRTVEIFVNYYGNLFPGGTLGSVKPQDPDVLDSFHCSLTSGVTSLFSIPAGSCDLSSQPRSTDGTFDLTVVSSDGVHSTVTNNIRVFFAGFSNATIDNSILLRVGVPTVKDFLTNHYLHFLRIASSQLTGLGTAVQLYAAYEENNRTFLLAAVKRNNNQYVNPSGVATFFESIKEILLRQSGVKVESVDHDPCIHGPCQNGGSCLRRLAVGSALKIQESLPVIIVANEPLQPSQCKCVPGYAGSWCEVDIDECLPAPCHNGGTCHNLVGGFSCSCPEGFTGRACERDINECLPSPCKHGAVCQNFPGGFNCVCKTGYTGKMCESSVNYCECNPCFNGGSCQSGVESYYCHCPFGVFGKHCELNSYGFEELSYMEFPSLDPNNNYIYVKFATIKSHALLLYNYDNQTGERAEFLALEIAEERLRFSYNLGSGTYKLTTMKKVSDGQFHTVIARRAGMAASLTVDSCSENQEPGYCTVSNVAVSDDWTLDVQPNRVTVGGIRSLEPILQRRGHVESHDFVGCVMEFAVNGRPLEPSQALAAQGILDQCPRLEGTCARNPCQHGGTCVDFWSWQQCQCMEGLTGKYCEKSVTPDTALSLEGKGRLDYHMSQSEKREYLLTQSIRDTTLEPFGVNSLEVKFRTRSENGILIHIQESSNYTTVKIKNGKVHFTSDAGVAGKVERIIPEAYIADGHWHTFRISKNGSITVLSVDRIHNRDIVHPTQDFGGIEVLSMSLGGIPPNQAHRDTQTGFNGCIASVLYGGESLPFSGKHSLASISKTDPSVKIGCRGPNICASNPCWGDLLCINQWYAYKCVPPGDCASHPCQNGGSCEPGLLSGYTCSCPESHTGRTCETVVACLGVLCPQGKVCKAGSPGGHVCVQSQGPDEISLPLWAVPAIVGSCATALALLVLSLILCNQCRGKMPKNPKEEKKPKEKKKKGSENVAFDDPDNIPPYGDDLAVRKQPEGNPKPDIIERENPYLIFDETDIPHNSETIPSAPLASPEQEIEHYDIDNASSIAPSDADIIQHYKQFRSHTPKFSIQRHSPLGFARQSPMPLGASSLTYQPSSYGQGLRTSSLSHSACPTPNPLSRHSPAPFSKPSAFYRNSPARELHLPLRDGGTLEMHGDPCQPGMFNYATRLGRRSKSPQAMASHGSRPGSRLKQPIAQIPLESSPPVGLSIEEVERLNTPRPRNPSICSADHGRSSSEEDCRRPLSRTRNPADGIPAPESSSDSDSHDSFTCSEMEYDREKPVVYTSRMPKLSQVNESDADDEDNYGARLKPRRYHGRRAEGGPVGTPAAASGAADSTLKLGQQAGNFNWDNLLNWGPGFGHYVDVFKDLASLPEKAAGNEEGKSGAAKPAAKDGEAEQYV.

Positions 1 to 42 (MNLAANRAPGRRRLPLPSPSLCQLLRVWGLLSLLPGSARVQA) are cleaved as a signal peptide. Over 43–4505 (AEQRQVFQVM…PDEISLPLWA (4463 aa)) the chain is Extracellular. 34 consecutive Cadherin domains span residues 44–135 (EQRQ…APVF), 136–250 (PDPS…PPVF), 251–353 (GSSH…DPVV), 359–475 (PATS…PPVF), 476–582 (EQQV…KPVF), 584–689 (QPEG…SPVF), 690–793 (YPVQ…PPVF), 794–893 (SQAA…APHF), 894–996 (LQAV…PPVF), 997–1100 (DQIS…RPLF), 1101–1210 (NSTN…APKF), 1211–1315 (LKDF…TPSF), 1316–1420 (PKST…PPSF), 1421–1529 (PPGD…VPMF), 1529–1629 (FISQ…GPVF), 1630–1740 (TQTK…PPVF), 1741–1841 (PTDT…TPRF), 1842–1944 (SRPV…PPVF), 1945–2051 (SMSS…PPMF), 2051–2154 (FLSP…NPVF), 2155–2259 (AQAM…VPVF), 2260–2364 (ELSP…VPTF), 2365–2468 (ANNM…PPRF), 2469–2569 (QHHP…FPKV), 2570–2671 (RAKE…APTF), 2672–2775 (EEDP…APRF), 2775–2874 (FSQI…TPRF), 2875–2985 (SRPS…PPQF), 2986–3091 (LQNK…TPEF), 3092–3196 (SQNH…SPVF), 3197–3300 (VPDE…VPRF), 3301–3406 (VSKL…PPVF), 3407–3512 (SLST…GPVL), and 3511–3622 (VLTV…VEIF). N-linked (GlcNAc...) asparagine glycosylation is found at Asn-84 and Asn-237. Residues Asn-393, Asn-416, Asn-435, Asn-483, Asn-551, Asn-615, Asn-676, Asn-721, Asn-825, Asn-880, Asn-948, Asn-1085, Asn-1101, Asn-1104, Asn-1225, Asn-1296, Asn-1389, and Asn-1514 are each glycosylated (N-linked (GlcNAc...) asparagine). 4 N-linked (GlcNAc...) asparagine glycosylation sites follow: Asn-1828, Asn-1899, Asn-1967, and Asn-2119. N-linked (GlcNAc...) asparagine glycosylation is found at Asn-2387 and Asn-2432. N-linked (GlcNAc...) asparagine glycans are attached at residues Asn-2923, Asn-2939, Asn-3038, Asn-3142, Asn-3219, Asn-3394, and Asn-3479. 2 N-linked (GlcNAc...) asparagine glycosylation sites follow: Asn-3708 and Asn-3760. One can recognise an EGF-like 1 domain in the interval 3804–3862 (DHDPCIHGPCQNGGSCLRRLAVGSALKIQESLPVIIVANEPLQPSQCKCVPGYAGSWCE). Disulfide bonds link Cys-3808-Cys-3819, Cys-3813-Cys-3850, Cys-3852-Cys-3861, Cys-3868-Cys-3879, Cys-3873-Cys-3888, Cys-3890-Cys-3899, Cys-3906-Cys-3917, Cys-3911-Cys-3926, Cys-3928-Cys-3937, Cys-3944-Cys-3955, Cys-3949-Cys-3964, and Cys-3966-Cys-3975. The 37-residue stretch at 3864–3900 (DIDECLPAPCHNGGTCHNLVGGFSCSCPEGFTGRACE) folds into the EGF-like 2; calcium-binding domain. The region spanning 3902 to 3938 (DINECLPSPCKHGAVCQNFPGGFNCVCKTGYTGKMCE) is the EGF-like 3; calcium-binding domain. The EGF-like 4 domain occupies 3940–3976 (SVNYCECNPCFNGGSCQSGVESYYCHCPFGVFGKHCE). Positions 3977–4161 (LNSYGFEELS…LAAQGILDQC (185 aa)) constitute a Laminin G-like 1 domain. An N-linked (GlcNAc...) asparagine glycan is attached at Asn-4019. Intrachain disulfides connect Cys-4135-Cys-4161, Cys-4168-Cys-4179, Cys-4173-Cys-4188, and Cys-4190-Cys-4199. In terms of domain architecture, EGF-like 5 spans 4164-4200 (LEGTCARNPCQHGGTCVDFWSWQQCQCMEGLTGKYCE). The region spanning 4219-4399 (YHMSQSEKRE…KTDPSVKIGC (181 aa)) is the Laminin G-like 2 domain. 2 N-linked (GlcNAc...) asparagine glycosylation sites follow: Asn-4269 and Asn-4314. Disulfide bonds link Cys-4366–Cys-4399, Cys-4431–Cys-4442, Cys-4436–Cys-4452, and Cys-4454–Cys-4463. The EGF-like 6 domain maps to 4427 to 4464 (PPGDCASHPCQNGGSCEPGLLSGYTCSCPESHTGRTCE). The helical transmembrane segment at 4506–4526 (VPAIVGSCATALALLVLSLIL) threads the bilayer. Residues 4527 to 4981 (CNQCRGKMPK…AKDGEAEQYV (455 aa)) are Cytoplasmic-facing. 5 disordered regions span residues 4535–4585 (PKNP…PDII), 4677–4713 (PSSY…KPSA), 4753–4773 (RRSK…SRLK), 4796–4911 (RLNT…PAAA), and 4957–4981 (AAGN…EQYV). A compositionally biased stretch (polar residues) spans 4677 to 4701 (PSSYGQGLRTSSLSHSACPTPNPLS). A necessary and sufficient for interaction with MPDZ region spans residues 4708–4797 (FSKPSAFYRN…GLSIEEVERL (90 aa)). Residues 4811 to 4823 (DHGRSSSEEDCRR) show a composition bias toward basic and acidic residues. Phosphoserine is present on Ser-4878. The span at 4971 to 4981 (AAKDGEAEQYV) shows a compositional bias: basic and acidic residues.

As to quaternary structure, heterophilic interaction with DCHS1; this interaction affects their respective protein levels. Interacts (via cytoplasmic domain) with MPDZ. Forms a complex with PALS1 and MPDZ. Widely expressed.

The protein localises to the membrane. Functionally, cadherins are cell-cell interaction molecules. FAT4 plays a role in the maintenance of planar cell polarity as well as in inhibition of YAP1-mediated neuroprogenitor cell proliferation and differentiation. In Mus musculus (Mouse), this protein is Protocadherin Fat 4 (Fat4).